The following is a 138-amino-acid chain: Putative pre-16S rRNA nuclease (138 aa).

The protein belongs to the YqgF nuclease family.

It is found in the cytoplasm. Functionally, could be a nuclease involved in processing of the 5'-end of pre-16S rRNA. This chain is Putative pre-16S rRNA nuclease, found in Caldicellulosiruptor saccharolyticus (strain ATCC 43494 / DSM 8903 / Tp8T 6331).